The sequence spans 198 residues: Imidazoleglycerol-phosphate dehydratase (198 aa).

The protein belongs to the imidazoleglycerol-phosphate dehydratase family.

It localises to the cytoplasm. It catalyses the reaction D-erythro-1-(imidazol-4-yl)glycerol 3-phosphate = 3-(imidazol-4-yl)-2-oxopropyl phosphate + H2O. It participates in amino-acid biosynthesis; L-histidine biosynthesis; L-histidine from 5-phospho-alpha-D-ribose 1-diphosphate: step 6/9. In Gluconobacter oxydans (strain 621H) (Gluconobacter suboxydans), this protein is Imidazoleglycerol-phosphate dehydratase.